Here is a 143-residue protein sequence, read N- to C-terminus: Methylglyoxal synthase (143 aa).

In terms of domain architecture, MGS-like spans 1-143 (MTVKKIALVA…DYEAYRNRII (143 aa)). Substrate-binding positions include His11, Lys15, 37–40 (TGST), and 57–58 (SG). The active-site Proton donor/acceptor is Asp63. His90 lines the substrate pocket.

It belongs to the methylglyoxal synthase family.

The enzyme catalyses dihydroxyacetone phosphate = methylglyoxal + phosphate. In terms of biological role, catalyzes the formation of methylglyoxal from dihydroxyacetone phosphate. This Coxiella burnetii (strain Dugway 5J108-111) protein is Methylglyoxal synthase.